Here is a 199-residue protein sequence, read N- to C-terminus: Small ribosomal subunit protein uS4B (199 aa).

Positions 88–151 constitute an S4 RNA-binding domain; it reads CRLDNLVYRT…RKNKIFIDNF (64 aa).

It belongs to the universal ribosomal protein uS4 family. As to quaternary structure, part of the 30S ribosomal subunit. Contacts protein S5. The interaction surface between S4 and S5 is involved in control of translational fidelity.

Its function is as follows. One of the primary rRNA binding proteins, it binds directly to 16S rRNA where it nucleates assembly of the body of the 30S subunit. With S5 and S12 plays an important role in translational accuracy. This is Small ribosomal subunit protein uS4B from Alkaliphilus metalliredigens (strain QYMF).